We begin with the raw amino-acid sequence, 632 residues long: Chaperone protein DnaK (632 aa).

Thr198 carries the phosphothreonine; by autocatalysis modification. Positions 599–632 are disordered; it reads YKKAGASQQGAGSTTQSKKEEDVIEAEVEDKDNK. Positions 604–614 are enriched in polar residues; the sequence is ASQQGAGSTTQ. Acidic residues predominate over residues 620–632; that stretch reads DVIEAEVEDKDNK.

It belongs to the heat shock protein 70 family.

In terms of biological role, acts as a chaperone. In Thermodesulfovibrio yellowstonii (strain ATCC 51303 / DSM 11347 / YP87), this protein is Chaperone protein DnaK.